We begin with the raw amino-acid sequence, 320 residues long: MLNDLKLSLQYILPKLWLTRLAGWGASKRAGWLTKLVIDLFVKYYKVDMKEAQKPDTAAYRTFNDFFVRPLRDDVRPLNTDPNVLVMPADGVISQLGAIENDKILQAKGHDYSLEALLAGNYQMADLFRNGSFATTYLSPRDYHRVHMPCNGILREMIYVPGDLFSVNHLTAQNVPNLFARNERVICLFDTEFGPMAQILVGATIVGSIETVWSGTVTPPREGIIKRWTWPAGDNEGSIALLKGQEMGRFKLGSTVINLFAPGQVKLVDTLQSLSVTKIGQPLATAVEATAAAEPAPLPEEEIRAEHRASPLVDDKQDQG.

Active-site charge relay system; for autoendoproteolytic cleavage activity residues include aspartate 90, histidine 147, and serine 254. Serine 254 functions as the Schiff-base intermediate with substrate; via pyruvic acid; for decarboxylase activity in the catalytic mechanism. Serine 254 is subject to Pyruvic acid (Ser); by autocatalysis. The segment at 290 to 320 is disordered; that stretch reads TAAAEPAPLPEEEIRAEHRASPLVDDKQDQG. A compositionally biased stretch (basic and acidic residues) spans 301 to 320; it reads EEIRAEHRASPLVDDKQDQG.

It belongs to the phosphatidylserine decarboxylase family. PSD-B subfamily. Prokaryotic type I sub-subfamily. In terms of assembly, heterodimer of a large membrane-associated beta subunit and a small pyruvoyl-containing alpha subunit. The cofactor is pyruvate. Post-translationally, is synthesized initially as an inactive proenzyme. Formation of the active enzyme involves a self-maturation process in which the active site pyruvoyl group is generated from an internal serine residue via an autocatalytic post-translational modification. Two non-identical subunits are generated from the proenzyme in this reaction, and the pyruvate is formed at the N-terminus of the alpha chain, which is derived from the carboxyl end of the proenzyme. The autoendoproteolytic cleavage occurs by a canonical serine protease mechanism, in which the side chain hydroxyl group of the serine supplies its oxygen atom to form the C-terminus of the beta chain, while the remainder of the serine residue undergoes an oxidative deamination to produce ammonia and the pyruvoyl prosthetic group on the alpha chain. During this reaction, the Ser that is part of the protease active site of the proenzyme becomes the pyruvoyl prosthetic group, which constitutes an essential element of the active site of the mature decarboxylase.

The protein localises to the cell membrane. The enzyme catalyses a 1,2-diacyl-sn-glycero-3-phospho-L-serine + H(+) = a 1,2-diacyl-sn-glycero-3-phosphoethanolamine + CO2. The protein operates within phospholipid metabolism; phosphatidylethanolamine biosynthesis; phosphatidylethanolamine from CDP-diacylglycerol: step 2/2. Functionally, catalyzes the formation of phosphatidylethanolamine (PtdEtn) from phosphatidylserine (PtdSer). The polypeptide is Phosphatidylserine decarboxylase proenzyme (Klebsiella pneumoniae subsp. pneumoniae (strain ATCC 700721 / MGH 78578)).